A 687-amino-acid chain; its full sequence is Polyphosphate kinase (687 aa).

Residue Asn-45 participates in ATP binding. 2 residues coordinate Mg(2+): Arg-375 and Arg-405. His-435 serves as the catalytic Phosphohistidine intermediate. Tyr-472, Arg-568, and His-596 together coordinate ATP.

The protein belongs to the polyphosphate kinase 1 (PPK1) family. The cofactor is Mg(2+). Post-translationally, an intermediate of this reaction is the autophosphorylated ppk in which a phosphate is covalently linked to a histidine residue through a N-P bond.

The enzyme catalyses [phosphate](n) + ATP = [phosphate](n+1) + ADP. Its function is as follows. Catalyzes the reversible transfer of the terminal phosphate of ATP to form a long-chain polyphosphate (polyP). This Burkholderia ambifaria (strain MC40-6) protein is Polyphosphate kinase.